A 97-amino-acid polypeptide reads, in one-letter code: Large ribosomal subunit protein uL23 (97 aa).

It belongs to the universal ribosomal protein uL23 family. As to quaternary structure, part of the 50S ribosomal subunit. Contacts protein L29, and trigger factor when it is bound to the ribosome.

In terms of biological role, one of the early assembly proteins it binds 23S rRNA. One of the proteins that surrounds the polypeptide exit tunnel on the outside of the ribosome. Forms the main docking site for trigger factor binding to the ribosome. This Marinobacter nauticus (strain ATCC 700491 / DSM 11845 / VT8) (Marinobacter aquaeolei) protein is Large ribosomal subunit protein uL23.